A 217-amino-acid polypeptide reads, in one-letter code: Large ribosomal subunit protein bL25 (217 aa).

A disordered region spans residues 187-217; the sequence is STPSGLEVEEETGEEESAEPEVIEKGKKEEE. A compositionally biased stretch (acidic residues) spans 193 to 207; that stretch reads EVEEETGEEESAEPE. Positions 208–217 are enriched in basic and acidic residues; the sequence is VIEKGKKEEE.

It belongs to the bacterial ribosomal protein bL25 family. CTC subfamily. In terms of assembly, part of the 50S ribosomal subunit; part of the 5S rRNA/L5/L18/L25 subcomplex. Contacts the 5S rRNA. Binds to the 5S rRNA independently of L5 and L18.

Its function is as follows. This is one of the proteins that binds to the 5S RNA in the ribosome where it forms part of the central protuberance. The protein is Large ribosomal subunit protein bL25 of Thermosipho africanus (strain TCF52B).